A 381-amino-acid chain; its full sequence is Cytochrome b (381 aa).

4 consecutive transmembrane segments (helical) span residues Phe-34–Met-54, Trp-78–Ile-99, Trp-114–Leu-134, and Phe-179–Leu-199. Positions 84 and 98 each coordinate heme b. Residues His-183 and His-197 each contribute to the heme b site. Residue His-202 coordinates a ubiquinone. The next 4 helical transmembrane spans lie at Tyr-227–Thr-247, Leu-289–His-309, Leu-321–Gly-341, and Phe-348–Pro-368.

Belongs to the cytochrome b family. The cytochrome bc1 complex contains 3 respiratory subunits (MT-CYB, CYC1 and UQCRFS1), 2 core proteins (UQCRC1 and UQCRC2) and probably 6 low-molecular weight proteins. Requires heme b as cofactor.

It localises to the mitochondrion inner membrane. Functionally, component of the ubiquinol-cytochrome c reductase complex (complex III or cytochrome b-c1 complex) that is part of the mitochondrial respiratory chain. The b-c1 complex mediates electron transfer from ubiquinol to cytochrome c. Contributes to the generation of a proton gradient across the mitochondrial membrane that is then used for ATP synthesis. This is Cytochrome b (mt-cyb) from Negaprion brevirostris (Lemon shark).